Here is a 949-residue protein sequence, read N- to C-terminus: Protein translocase subunit SecA 1 (949 aa).

ATP contacts are provided by residues Gln86, Gly104–Thr108, and Asp493. The interval Val869–Arg949 is disordered. Residues Ser925–Arg934 show a composition bias toward basic and acidic residues.

The protein belongs to the SecA family. As to quaternary structure, monomer and homodimer. Part of the essential Sec protein translocation apparatus which comprises SecA, SecYEG and auxiliary proteins SecDF. Other proteins may also be involved.

The protein resides in the cell membrane. The protein localises to the cytoplasm. It catalyses the reaction ATP + H2O + cellular proteinSide 1 = ADP + phosphate + cellular proteinSide 2.. Part of the Sec protein translocase complex. Interacts with the SecYEG preprotein conducting channel. Has a central role in coupling the hydrolysis of ATP to the transfer of proteins into and across the cell membrane, serving as an ATP-driven molecular motor driving the stepwise translocation of polypeptide chains across the membrane. The sequence is that of Protein translocase subunit SecA 1 from Mycobacterium bovis (strain ATCC BAA-935 / AF2122/97).